A 143-amino-acid polypeptide reads, in one-letter code: Lysozyme C (143 aa).

The first 15 residues, 1–15, serve as a signal peptide directing secretion; the sequence is MKIPVFLLLLALANA. Positions 16–143 constitute a C-type lysozyme domain; that stretch reads KVFQRCEWAR…LSAYIAGCGL (128 aa). 4 cysteine pairs are disulfide-bonded: Cys-21–Cys-141, Cys-45–Cys-129, Cys-79–Cys-94, and Cys-90–Cys-108. Active-site residues include Glu-50 and Asp-67.

The protein belongs to the glycosyl hydrolase 22 family. Monomer.

Its subcellular location is the secreted. The catalysed reaction is Hydrolysis of (1-&gt;4)-beta-linkages between N-acetylmuramic acid and N-acetyl-D-glucosamine residues in a peptidoglycan and between N-acetyl-D-glucosamine residues in chitodextrins.. Functionally, lysozymes have primarily a bacteriolytic function; those in tissues and body fluids are associated with the monocyte-macrophage system and enhance the activity of immunoagents. The chain is Lysozyme C from Takifugu rubripes (Japanese pufferfish).